A 351-amino-acid chain; its full sequence is Basic salivary proline-rich protein 3 (351 aa).

Positions 1 to 16 (MLLILLSVALLALSSA) are cleaved as a signal peptide. Position 17 is a pyrrolidone carboxylic acid (Gln-17). Positions 17 to 351 (QSLNEDVSQE…HRPPQGQPPQ (335 aa)) are disordered. Positions 20-31 (NEDVSQEESPSV) are enriched in polar residues. Ser-24 bears the Phosphoserine mark. Tandem repeats lie at residues 53–73 (PPGK…GPPP), 74–94 (RPGK…GPPP), 95–115 (RPGK…GPPP), 116–136 (RPGK…GPPP), 137–157 (RPGK…GPPP), 158–178 (RPGK…GPPP), 179–199 (HPGK…GPPP), 200–220 (RPGK…GPPP), 221–241 (RPGK…GPPP), 242–261 (RPGK…QGPP), 263–283 (RPGK…GPPP), and 284–304 (HPGK…RPPP). The 12 X 21 AA tandem repeats of [RHP]-P-G-K-P-[EQ]-G-[PQS]-P-[PS]-Q-[GE]-G-N-[QK]-[SP]-[QR]-[GR]-P-P-P stretch occupies residues 53 to 304 (PPGKPEGRPP…EGNKPQRPPP (252 aa)). Asn-66 is a glycosylation site (N-linked (GlcNAc...) asparagine). A compositionally biased stretch (pro residues) spans 70–84 (GPPPRPGKPEGPPPQ). Asn-87 is a glycosylation site (N-linked (GlcNAc...) asparagine). O-linked (Hex) serine glycosylation is present at Ser-89. The span at 99 to 111 (PEGQPPQGGNQSQ) shows a compositional bias: low complexity. Residue Asn-108 is glycosylated (N-linked (GlcNAc...) asparagine). Over residues 112 to 126 (GPPPRPGKPEGPPPQ) the composition is skewed to pro residues. The N-linked (GlcNAc...) asparagine glycan is linked to Asn-129. Residues 133-147 (GPPPRPGKPEGPPPQ) are compositionally biased toward pro residues. N-linked (GlcNAc...) asparagine glycosylation is present at Asn-150. Composition is skewed to pro residues over residues 154 to 168 (GPPP…PPPQ) and 175 to 189 (GPPP…PPPQ). A glycan (N-linked (GlcNAc...) asparagine) is linked at Asn-192. Residues 196-210 (GPPPRPGKPEGPPPQ) show a composition bias toward pro residues. Residues Asn-213 and Asn-234 are each glycosylated (N-linked (GlcNAc...) asparagine). Pro residues-rich tracts occupy residues 217–252 (GPPP…PPPQ), 259–270 (GPPPRPGKPEGP), and 279–351 (QGPP…QPPQ). A glycan (N-linked (Hex) asparagine; atypical) is linked at Asn-297.

In terms of processing, N- and O-glycosylated; contains about 50% carbohydrate. This is composed of highly fucosylated N-linked saccharides, the major structure is a biantennary asialosaccharide containing 2 fucose residues on one antenna and an unsubstituted terminal lactosamine sequence on the other. The Gram-negative bacterium F.nucleatum binds to carbohydrates containing unsubstituted GalBeta1,4GlcNAc residues. N-glycosylation on Asn-87 is prevalent in head and neck cancer patients. Post-translationally, proteolytically cleaved at the tripeptide Xaa-Pro-Gln, where Xaa in the P(3) position is mostly lysine. The endoprotease may be of microbial origin. Besides on the N-terminal of mature PRB3, pyroglutamate formation found on at least Gln-67, Gln-88, Gln-256 and Gln-337.

It is found in the secreted. In terms of biological role, acts as a receptor for the Gram-negative bacterium F.nucleatum. The chain is Basic salivary proline-rich protein 3 (PRB3) from Homo sapiens (Human).